Consider the following 66-residue polypeptide: Cold shock-like protein (66 aa).

Residues 3–62 enclose the CSD domain; it reads GKVKWFDSKKGYGFITKDEGGDVFVHWSAIEMEGFKTLKEGQVVEFEIQEGKKGPQAAHV.

In terms of assembly, monomer.

The protein localises to the cytoplasm. This is Cold shock-like protein (csp) from Thermotoga maritima (strain ATCC 43589 / DSM 3109 / JCM 10099 / NBRC 100826 / MSB8).